The sequence spans 130 residues: Flagellar assembly factor FliW (130 aa).

This sequence belongs to the FliW family. As to quaternary structure, interacts with translational regulator CsrA and flagellin(s).

It localises to the cytoplasm. Acts as an anti-CsrA protein, binds CsrA and prevents it from repressing translation of its target genes, one of which is flagellin. Binds to flagellin and participates in the assembly of the flagellum. In Borreliella burgdorferi (strain ATCC 35210 / DSM 4680 / CIP 102532 / B31) (Borrelia burgdorferi), this protein is Flagellar assembly factor FliW.